A 193-amino-acid chain; its full sequence is MAVIPMVVEQSSKGERAYDIYSRLLKERIIFLNGGVEDEMAKLIIAQMLFLEAEDPEKDIYLYINSPGGVVTAGLAIYDTMNFIKPDVSTLCMGQACSMGAFLLSAGAKGKRFALPNSRVMIHQPLGGYRGQATDIQIHAQEILKLKEMLTRKMAEHCSQPFEKVAQDTERDNFMSAEEAKAYGLIDDVVTKR.

S98 functions as the Nucleophile in the catalytic mechanism. H123 is an active-site residue.

Belongs to the peptidase S14 family. As to quaternary structure, fourteen ClpP subunits assemble into 2 heptameric rings which stack back to back to give a disk-like structure with a central cavity, resembling the structure of eukaryotic proteasomes.

The protein localises to the cytoplasm. The catalysed reaction is Hydrolysis of proteins to small peptides in the presence of ATP and magnesium. alpha-casein is the usual test substrate. In the absence of ATP, only oligopeptides shorter than five residues are hydrolyzed (such as succinyl-Leu-Tyr-|-NHMec, and Leu-Tyr-Leu-|-Tyr-Trp, in which cleavage of the -Tyr-|-Leu- and -Tyr-|-Trp bonds also occurs).. Cleaves peptides in various proteins in a process that requires ATP hydrolysis. Has a chymotrypsin-like activity. Plays a major role in the degradation of misfolded proteins. The protein is ATP-dependent Clp protease proteolytic subunit of Glaesserella parasuis serovar 5 (strain SH0165) (Haemophilus parasuis).